Here is a 296-residue protein sequence, read N- to C-terminus: Formamidopyrimidine-DNA glycosylase (296 aa).

Pro-2 functions as the Schiff-base intermediate with DNA in the catalytic mechanism. Glu-3 functions as the Proton donor in the catalytic mechanism. Lys-58 functions as the Proton donor; for beta-elimination activity in the catalytic mechanism. 3 residues coordinate DNA: His-106, Arg-125, and Lys-167. An FPG-type zinc finger spans residues 258–294; it reads RVYDRVGLPCSRPGCAGAITRIVQANRSTFFCATCQP. Arg-284 (proton donor; for delta-elimination activity) is an active-site residue.

This sequence belongs to the FPG family. As to quaternary structure, monomer. Zn(2+) is required as a cofactor.

It catalyses the reaction Hydrolysis of DNA containing ring-opened 7-methylguanine residues, releasing 2,6-diamino-4-hydroxy-5-(N-methyl)formamidopyrimidine.. The enzyme catalyses 2'-deoxyribonucleotide-(2'-deoxyribose 5'-phosphate)-2'-deoxyribonucleotide-DNA = a 3'-end 2'-deoxyribonucleotide-(2,3-dehydro-2,3-deoxyribose 5'-phosphate)-DNA + a 5'-end 5'-phospho-2'-deoxyribonucleoside-DNA + H(+). Involved in base excision repair of DNA damaged by oxidation or by mutagenic agents. Acts as a DNA glycosylase that recognizes and removes damaged bases. Has a preference for oxidized purines, such as 7,8-dihydro-8-oxoguanine (8-oxoG). Has AP (apurinic/apyrimidinic) lyase activity and introduces nicks in the DNA strand. Cleaves the DNA backbone by beta-delta elimination to generate a single-strand break at the site of the removed base with both 3'- and 5'-phosphates. In Methylobacterium radiotolerans (strain ATCC 27329 / DSM 1819 / JCM 2831 / NBRC 15690 / NCIMB 10815 / 0-1), this protein is Formamidopyrimidine-DNA glycosylase.